An 835-amino-acid chain; its full sequence is Telomere length regulation protein TEL2 homolog (835 aa).

2 disordered regions span residues 455–501 (SADC…LAPY) and 629–648 (LSHE…HSIR). Residues 464–473 (ESSPSKSCPK) show a composition bias toward low complexity. Residues 474 to 486 (AIEKSKMEAKADQ) show a composition bias toward basic and acidic residues. Acidic residues predominate over residues 488-499 (SDSELDSDDDLA). Positions 636-648 (ESRSTGTGQHSIR) are enriched in polar residues.

The protein belongs to the TEL2 family.

It is found in the cytoplasm. The protein resides in the membrane. Its subcellular location is the nucleus. It localises to the chromosome. The protein localises to the telomere. Functionally, regulator of the DNA damage response (DDR). Part of the TTT complex that is required to stabilize protein levels of the phosphatidylinositol 3-kinase-related protein kinase (PIKK) family proteins. Promotes assembly, stabilizes and maintains the activity of TORC complexes, which regulate cell growth and survival in response to nutrient and hormonal signals. May be involved in telomere length regulation. This chain is Telomere length regulation protein TEL2 homolog (telo2), found in Xenopus laevis (African clawed frog).